The sequence spans 399 residues: tRNA-specific 2-thiouridylase MnmA (399 aa).

Residues 18–25 (AMSGGVDS) and Leu-44 contribute to the ATP site. Cys-112 (nucleophile) is an active-site residue. A disulfide bridge connects residues Cys-112 and Cys-213. Gly-136 is a binding site for ATP. The segment at 163–165 (RDQ) is interaction with tRNA. The active-site Cysteine persulfide intermediate is Cys-213.

It belongs to the MnmA/TRMU family.

Its subcellular location is the cytoplasm. The enzyme catalyses S-sulfanyl-L-cysteinyl-[protein] + uridine(34) in tRNA + AH2 + ATP = 2-thiouridine(34) in tRNA + L-cysteinyl-[protein] + A + AMP + diphosphate + H(+). In terms of biological role, catalyzes the 2-thiolation of uridine at the wobble position (U34) of tRNA, leading to the formation of s(2)U34. The protein is tRNA-specific 2-thiouridylase MnmA of Rhizobium leguminosarum bv. trifolii (strain WSM2304).